The following is a 338-amino-acid chain: Phenylalanine--tRNA ligase alpha subunit (338 aa).

Glu-253 serves as a coordination point for Mg(2+).

The protein belongs to the class-II aminoacyl-tRNA synthetase family. Phe-tRNA synthetase alpha subunit type 1 subfamily. In terms of assembly, tetramer of two alpha and two beta subunits. Mg(2+) is required as a cofactor.

It is found in the cytoplasm. The enzyme catalyses tRNA(Phe) + L-phenylalanine + ATP = L-phenylalanyl-tRNA(Phe) + AMP + diphosphate + H(+). The chain is Phenylalanine--tRNA ligase alpha subunit from Pelobacter propionicus (strain DSM 2379 / NBRC 103807 / OttBd1).